The chain runs to 364 residues: Putative apoptosis inhibitor ORF42 (364 aa).

The BIR 1 repeat unit spans residues 24-89 (RLATFRGYEY…CREGVVSAPQ (66 aa)). The disordered stretch occupies residues 83-126 (GVVSAPQQQPPPPPSTSIGAVGGDPRPEDMNVPERGWDPPMSKD). Residues 117–126 (RGWDPPMSKD) show a composition bias toward basic and acidic residues. BIR repeat units follow at residues 127 to 193 (PKST…PLVV) and 236 to 300 (RIAS…ANMA). The RING-type zinc finger occupies 315–350 (CVICLGAKADTILKPCLHYSLCYGCSTQVQKCPLCR).

In terms of biological role, may act as an apoptosis inhibitor. The polypeptide is Putative apoptosis inhibitor ORF42 (Magallana gigas (Pacific oyster)).